We begin with the raw amino-acid sequence, 418 residues long: uncharacterized protein (418 aa).

4 disordered regions span residues 123–174 (KVKD…DSDK), 209–231 (FDKE…EKEE), 258–302 (KDDN…DEEL), and 344–418 (KDAD…YFKK). Over residues 136–154 (NKKDKKDKNKQNEEDHLII) the composition is skewed to basic and acidic residues. Over residues 156–170 (DVIDEEIQEKEDNES) the composition is skewed to acidic residues. Over residues 209–227 (FDKEEKEREKEKEKEKEKE) the composition is skewed to basic and acidic residues. Over residues 266-293 (NQNQNQNQNNNNNNNNNNNNNNNNNNNN) the composition is skewed to low complexity. The span at 344-356 (KDADDSDDFDEFN) shows a compositional bias: acidic residues. Over residues 359-374 (DTESQLSKSKQKSPNV) the composition is skewed to polar residues. The span at 375–390 (KKTTTTTTTSTSTSSR) shows a compositional bias: low complexity. Residues 391–401 (KQSKSKLKPKS) show a composition bias toward basic residues.

This is an uncharacterized protein from Dictyostelium discoideum (Social amoeba).